Here is a 138-residue protein sequence, read N- to C-terminus: Large ribosomal subunit protein uL16 (138 aa).

The span at M1–R17 shows a compositional bias: basic residues. The segment at M1–G24 is disordered.

The protein belongs to the universal ribosomal protein uL16 family. In terms of assembly, part of the 50S ribosomal subunit.

Binds 23S rRNA and is also seen to make contacts with the A and possibly P site tRNAs. The sequence is that of Large ribosomal subunit protein uL16 from Kineococcus radiotolerans (strain ATCC BAA-149 / DSM 14245 / SRS30216).